The sequence spans 310 residues: NADH-cytochrome b5 reductase 1 (310 aa).

Residues 32-52 (EWLPYAVALAAILSGGKVFSN) traverse the membrane as a helical segment. Positions 61-166 (TEFQNFELKE…RGPKGAMVYT (106 aa)) constitute an FAD-binding FR-type domain. FAD-binding positions include 146 to 161 (AGLR…GPKG) and 172 to 209 (KIGM…QVDL).

Belongs to the flavoprotein pyridine nucleotide cytochrome reductase family. As to quaternary structure, monomer. Component of the 2-(3-amino-3-carboxypropyl)histidine synthase complex composed of DPH1, DPH2, DPH3 and a NADH-dependent reductase, predominantly CBR1. It depends on FAD as a cofactor.

The protein resides in the mitochondrion outer membrane. The enzyme catalyses 2 Fe(III)-[cytochrome b5] + NADH = 2 Fe(II)-[cytochrome b5] + NAD(+) + H(+). The catalysed reaction is 2 Fe(3+)-[Dph3] + NADH = 2 Fe(2+)-[Dph3] + NAD(+) + H(+). It functions in the pathway protein modification; peptidyl-diphthamide biosynthesis. NADH-dependent reductase for DPH3 and cytochrome b5. Required for the first step of diphthamide biosynthesis, a post-translational modification of histidine which occurs in elongation factor 2. DPH1 and DPH2 transfer a 3-amino-3-carboxypropyl (ACP) group from S-adenosyl-L-methionine (SAM) to a histidine residue, the reaction is assisted by a reduction system comprising DPH3 and a NADH-dependent reductase, predominantly CBR1. By reducing DPH3, also involved in the formation of the tRNA wobble base modification mcm5s 2U (5-methoxycarbonylmethyl-2-thiouridine), mediated by the elongator complex. The cytochrome b5/NADH cytochrome b5 reductase electron transfer system supports the catalytic activity of several sterol biosynthetic enzymes. In Ajellomyces capsulatus (strain NAm1 / WU24) (Darling's disease fungus), this protein is NADH-cytochrome b5 reductase 1 (CBR1).